The following is a 474-amino-acid chain: uncharacterized protein (474 aa).

Residues M1–G23 form the signal peptide. The N-palmitoyl cysteine moiety is linked to residue C24. C24 is lipidated: S-diacylglycerol cysteine.

It belongs to the MG067/MG068/MG395 family.

It is found in the cell membrane. This is an uncharacterized protein from Mycoplasma genitalium (strain ATCC 33530 / DSM 19775 / NCTC 10195 / G37) (Mycoplasmoides genitalium).